Reading from the N-terminus, the 161-residue chain is Disulfide bond formation protein B (161 aa).

Residues 1 to 8 (MQANSRAY) are Cytoplasmic-facing. The helical transmembrane segment at 9–25 (FLLIAFISFGLVGFALY) threads the bilayer. At 26-43 (LQFEKGYQPCPLCIMQRF) the chain is on the periplasmic side. Cys-35 and Cys-38 form a disulfide bridge. The helical transmembrane segment at 44–58 (AFIGIGLFSLLAVIA) threads the bilayer. Topologically, residues 59 to 63 (QNTRS) are cytoplasmic. The chain crosses the membrane as a helical span at residues 64 to 81 (LWQGLGMLSGVGGIAVAV). The Periplasmic portion of the chain corresponds to 82-136 (YHVSLLLNPKASCGIDPLENWVNALPTAKVLPQVFYSDGLCTAPLPPVLGLSVPA). An intrachain disulfide couples Cys-94 to Cys-122. The chain crosses the membrane as a helical span at residues 137–155 (WSLIWLFILTLTLAVGLIR). At 156–161 (REKNFR) the chain is on the cytoplasmic side.

Belongs to the DsbB family.

The protein localises to the cell inner membrane. Its function is as follows. Required for disulfide bond formation in some periplasmic proteins. Acts by oxidizing the DsbA protein. The sequence is that of Disulfide bond formation protein B from Cupriavidus pinatubonensis (strain JMP 134 / LMG 1197) (Cupriavidus necator (strain JMP 134)).